The sequence spans 236 residues: Small ribosomal subunit protein uS2c (236 aa).

It belongs to the universal ribosomal protein uS2 family.

The protein localises to the plastid. The protein resides in the chloroplast. This Lepidium virginicum (Virginia pepperweed) protein is Small ribosomal subunit protein uS2c (rps2).